Consider the following 185-residue polypeptide: Peptidyl-tRNA hydrolase (185 aa).

Tyrosine 14 contacts tRNA. Histidine 19 (proton acceptor) is an active-site residue. Positions 64, 66, and 112 each coordinate tRNA.

The protein belongs to the PTH family. As to quaternary structure, monomer.

It is found in the cytoplasm. The enzyme catalyses an N-acyl-L-alpha-aminoacyl-tRNA + H2O = an N-acyl-L-amino acid + a tRNA + H(+). Hydrolyzes ribosome-free peptidyl-tRNAs (with 1 or more amino acids incorporated), which drop off the ribosome during protein synthesis, or as a result of ribosome stalling. Functionally, catalyzes the release of premature peptidyl moieties from peptidyl-tRNA molecules trapped in stalled 50S ribosomal subunits, and thus maintains levels of free tRNAs and 50S ribosomes. The chain is Peptidyl-tRNA hydrolase from Halalkalibacterium halodurans (strain ATCC BAA-125 / DSM 18197 / FERM 7344 / JCM 9153 / C-125) (Bacillus halodurans).